The primary structure comprises 589 residues: Deoxynucleoside triphosphate triphosphohydrolase SAMHD1 (589 aa).

At Met1 the chain carries N-acetylmethionine. Residues Met1–Pro10 show a composition bias toward polar residues. The disordered stretch occupies residues Met1–Asp41. Phosphoserine is present on Ser18. Thr21 bears the Phosphothreonine mark. 2 positions are modified to phosphoserine: Ser33 and Ser88. In terms of domain architecture, SAM spans Trp45–Gln100. 2 residues coordinate GTP: Lys104 and Val105. Residue Asn107 coordinates dGTP. Asp125, Gln130, and Arg133 together coordinate GTP. Residues Gln137, Leu138, Val144, and Arg152 each coordinate dGTP. Gln137 is a binding site for dATP. Gln137 contacts dCTP. Position 137 (Gln137) interacts with dTTP. Arg152 is a dATP binding site. A dCTP-binding site is contributed by Arg152. Arg152 lines the dTTP pocket. Positions Arg152–Lys277 constitute an HD domain. 3 residues coordinate Mn(2+): His155, His194, and Asp195. His198 and His203 together coordinate dATP. The dCTP site is built by His198 and His203. Residues His198 and His203 each contribute to the dTTP site. His221 is a catalytic residue. Asp300 serves as a coordination point for Mn(2+). Lys301, Tyr304, Asp308, Arg322, Arg341, Lys343, Asn347, Arg355, Tyr363, Gln364, His365, and Lys366 together coordinate dGTP. DATP is bound by residues Lys301, Tyr304, and Asp308. Lys301, Tyr304, and Asp308 together coordinate dCTP. Residues Lys301, Tyr304, and Asp308 each coordinate dTTP. Arg355 provides a ligand contact to dATP. Arg355 is a dCTP binding site. A dATP-binding site is contributed by Gln364. Gln364 serves as a coordination point for dCTP. Residue Gln364 coordinates dTTP. Residues Arg440 and Lys444 each contribute to the GTP site. Residue Lys457 forms a Glycyl lysine isopeptide (Lys-Gly) (interchain with G-Cter in SUMO2) linkage. Lys512 provides a ligand contact to GTP. Lys512 is a binding site for dGTP.

This sequence belongs to the SAMHD1 family. Homodimer; in absence of GTP and dNTP. Homotetramer; in GTP- and dNTP-bound form. Interacts with MRE11; leading to stimulate the exonuclease activity of MRE11. Interacts with RBBP8/CtIP. Interacts (via its C-terminus) with CD81. The cofactor is Zn(2+).

It is found in the nucleus. The protein resides in the chromosome. It carries out the reaction a 2'-deoxyribonucleoside 5'-triphosphate + H2O = a 2'-deoxyribonucleoside + triphosphate + H(+). It catalyses the reaction dATP + H2O = 2'-deoxyadenosine + triphosphate + H(+). The enzyme catalyses dCTP + H2O = 2'-deoxycytidine + triphosphate + H(+). The catalysed reaction is dGTP + H2O = 2'-deoxyguanosine + triphosphate + H(+). It carries out the reaction dTTP + H2O = thymidine + triphosphate + H(+). Its activity is regulated as follows. Allosterically activated and regulated via the combined actions of GTP and dNTPs (dATP, dGTP, dTTP and dCTP): Allosteric site 1 binds GTP, while allosteric site 2 binds dNTP. Allosteric activation promotes the formation of highly active homotetramers. In terms of biological role, protein that acts both as a host restriction factor involved in defense response to virus and as a regulator of DNA end resection at stalled replication forks. Has deoxynucleoside triphosphate (dNTPase) activity, which is required to restrict infection by viruses: dNTPase activity reduces cellular dNTP levels to levels too low for retroviral reverse transcription to occur, blocking early-stage virus replication in dendritic and other myeloid cells. Likewise, suppresses LINE-1 retrotransposon activity. In addition to virus restriction, dNTPase activity acts as a regulator of DNA precursor pools by regulating dNTP pools. Functions during S phase at stalled DNA replication forks to promote the resection of gapped or reversed forks: acts by stimulating the exonuclease activity of MRE11, activating the ATR-CHK1 pathway and allowing the forks to restart replication. Its ability to promote degradation of nascent DNA at stalled replication forks is required to prevent induction of type I interferons, thereby preventing chronic inflammation. Ability to promote DNA end resection at stalled replication forks is independent of dNTPase activity. Enhances immunoglobulin hypermutation in B-lymphocytes by promoting transversion mutation. The protein is Deoxynucleoside triphosphate triphosphohydrolase SAMHD1 of Bos taurus (Bovine).